The primary structure comprises 260 residues: Indole-3-glycerol phosphate synthase (260 aa).

It belongs to the TrpC family.

It carries out the reaction 1-(2-carboxyphenylamino)-1-deoxy-D-ribulose 5-phosphate + H(+) = (1S,2R)-1-C-(indol-3-yl)glycerol 3-phosphate + CO2 + H2O. It functions in the pathway amino-acid biosynthesis; L-tryptophan biosynthesis; L-tryptophan from chorismate: step 4/5. This Koribacter versatilis (strain Ellin345) protein is Indole-3-glycerol phosphate synthase.